A 297-amino-acid chain; its full sequence is Protoheme IX farnesyltransferase (297 aa).

The next 9 membrane-spanning stretches (helical) occupy residues 23–43, 49–69, 93–113, 117–137, 144–164, 171–191, 215–235, 238–258, and 275–295; these read VTQLAVFCAVIGMFLAAPGMP, VFGTLGIWLLAAAAFAINCLI, IQVLSLSGLLGGAGMLVLYHL, LTMWLTFATFVGYAIIYTVIL, NIVIGGLSGAMPPALGWAAVA, AWVLVLIIFIWTPPHFWALAL, RLHILLYSFALLATTLLPYAI, SGALYLASALALGGMFVWYAW, and FSILYLALLFGALLIDHWVGL.

The protein belongs to the UbiA prenyltransferase family. Protoheme IX farnesyltransferase subfamily.

The protein resides in the cell inner membrane. It carries out the reaction heme b + (2E,6E)-farnesyl diphosphate + H2O = Fe(II)-heme o + diphosphate. The protein operates within porphyrin-containing compound metabolism; heme O biosynthesis; heme O from protoheme: step 1/1. Converts heme B (protoheme IX) to heme O by substitution of the vinyl group on carbon 2 of heme B porphyrin ring with a hydroxyethyl farnesyl side group. The chain is Protoheme IX farnesyltransferase from Bordetella bronchiseptica (strain ATCC BAA-588 / NCTC 13252 / RB50) (Alcaligenes bronchisepticus).